We begin with the raw amino-acid sequence, 111 residues long: Latartoxin-2b (111 aa).

The N-terminal stretch at 1–19 (MKVLVIIALCFFILQTALS) is a signal peptide. The propeptide at 20–43 (EDKYESFESYVEDLKSGNMKGEAR) is removed in mature form. Positions 40-43 (GEAR) match the Processing quadruplet motif motif. 5 disulfide bridges follow: cysteine 45-cysteine 62, cysteine 52-cysteine 73, cysteine 61-cysteine 87, cysteine 75-cysteine 85, and cysteine 78-cysteine 99. Valine 110 bears the Valine amide mark.

The protein belongs to the neurotoxin 19 (CSTX) family. 11 (latartoxin) subfamily. Contains 5 disulfide bonds. In terms of processing, cleavage of the propeptide depends on the processing quadruplet motif (XXXR, with at least one of X being E). Expressed by the venom gland.

It localises to the secreted. Insect toxin. The polypeptide is Latartoxin-2b (Lachesana tarabaevi (Spider)).